Reading from the N-terminus, the 349-residue chain is Isopentenyl-diphosphate delta-isomerase (349 aa).

6–7 (RK) lines the substrate pocket. FMN-binding positions include 62–64 (AMT), Ser-93, and Asn-122. Gln-152 is a substrate binding site. Glu-153 contributes to the Mg(2+) binding site. FMN-binding positions include Lys-184, Thr-214, 258-259 (GG), and 280-281 (AG).

This sequence belongs to the IPP isomerase type 2 family. In terms of assembly, homooctamer. Dimer of tetramers. It depends on FMN as a cofactor. Requires NADPH as cofactor. The cofactor is Mg(2+).

It localises to the cytoplasm. It catalyses the reaction isopentenyl diphosphate = dimethylallyl diphosphate. Involved in the biosynthesis of isoprenoids. Catalyzes the 1,3-allylic rearrangement of the homoallylic substrate isopentenyl (IPP) to its allylic isomer, dimethylallyl diphosphate (DMAPP). The polypeptide is Isopentenyl-diphosphate delta-isomerase (Bacillus cereus (strain ZK / E33L)).